A 271-amino-acid chain; its full sequence is Formamidopyrimidine-DNA glycosylase (271 aa).

Pro-2 serves as the catalytic Schiff-base intermediate with DNA. Glu-3 (proton donor) is an active-site residue. Lys-57 (proton donor; for beta-elimination activity) is an active-site residue. Residues His-90, Arg-109, and Lys-151 each coordinate DNA. The FPG-type zinc-finger motif lies at 236-270 (HVYGRGGETCTSCGNLLSEIRLGQRTTVFCGICQT). Arg-260 serves as the catalytic Proton donor; for delta-elimination activity.

Belongs to the FPG family. As to quaternary structure, monomer. The cofactor is Zn(2+).

It carries out the reaction Hydrolysis of DNA containing ring-opened 7-methylguanine residues, releasing 2,6-diamino-4-hydroxy-5-(N-methyl)formamidopyrimidine.. It catalyses the reaction 2'-deoxyribonucleotide-(2'-deoxyribose 5'-phosphate)-2'-deoxyribonucleotide-DNA = a 3'-end 2'-deoxyribonucleotide-(2,3-dehydro-2,3-deoxyribose 5'-phosphate)-DNA + a 5'-end 5'-phospho-2'-deoxyribonucleoside-DNA + H(+). Involved in base excision repair of DNA damaged by oxidation or by mutagenic agents. Acts as a DNA glycosylase that recognizes and removes damaged bases. Has a preference for oxidized purines, such as 7,8-dihydro-8-oxoguanine (8-oxoG). Has AP (apurinic/apyrimidinic) lyase activity and introduces nicks in the DNA strand. Cleaves the DNA backbone by beta-delta elimination to generate a single-strand break at the site of the removed base with both 3'- and 5'-phosphates. This Shewanella baltica (strain OS155 / ATCC BAA-1091) protein is Formamidopyrimidine-DNA glycosylase.